The following is a 318-amino-acid chain: NAD(P)H-dependent D-xylose reductase (318 aa).

Tyr48 acts as the Proton donor in catalysis. His110 lines the substrate pocket. NAD(+)-binding positions include 165-166, 214-223, and 270-280; these read SN, SSFGPQSFVE, and KSNTVPRLLEN.

This sequence belongs to the aldo/keto reductase family.

It catalyses the reaction xylitol + NAD(+) = D-xylose + NADH + H(+). The enzyme catalyses xylitol + NADP(+) = D-xylose + NADPH + H(+). Its pathway is carbohydrate metabolism; D-xylose degradation. NADP(+) is a potent inhibitor of both the NADPH- and NADH-linked xylose reduction, whereas NAD(+) showS strong inhibition only with the NADH-linked reaction. Functionally, reduces D-xylose into xylitol. Has a preference for NADPH, but can also utilize NADH as cosubstrate. In Scheffersomyces stipitis (strain ATCC 58785 / CBS 6054 / NBRC 10063 / NRRL Y-11545) (Yeast), this protein is NAD(P)H-dependent D-xylose reductase (XYL1).